A 224-amino-acid chain; its full sequence is Ribosome maturation factor RimM (224 aa).

Residues 1–12 show a composition bias toward low complexity; that stretch reads MARRPGSSSRGP. Disordered regions lie at residues 1–46 and 204–224; these read MARR…PSLV and VADP…DDPG. The 75-residue stretch at 137 to 211 folds into the PRC barrel domain; that stretch reads EDEFFLTDLI…KVVADPPEDL (75 aa).

It belongs to the RimM family. In terms of assembly, binds ribosomal protein uS19.

It is found in the cytoplasm. Its function is as follows. An accessory protein needed during the final step in the assembly of 30S ribosomal subunit, possibly for assembly of the head region. Essential for efficient processing of 16S rRNA. May be needed both before and after RbfA during the maturation of 16S rRNA. It has affinity for free ribosomal 30S subunits but not for 70S ribosomes. In Methylorubrum populi (strain ATCC BAA-705 / NCIMB 13946 / BJ001) (Methylobacterium populi), this protein is Ribosome maturation factor RimM.